The primary structure comprises 175 residues: Disulfide bond formation protein B (175 aa).

Topologically, residues 1 to 13 (MTALTRFAHSRSS) are cytoplasmic. The helical transmembrane segment at 14–30 (WFLLTGTAIGLEAAALY) threads the bilayer. Topologically, residues 31-48 (FQYVMKLDPCVMCIYQRL) are periplasmic. Cys40 and Cys43 are oxidised to a cystine. Residues 49–64 (AVFGILVAGLIGMTAP) form a helical membrane-spanning segment. At 65–71 (KYRLIRI) the chain is on the cytoplasmic side. Residues 72–89 (LGASCWAVSATWGLKLAL) form a helical membrane-spanning segment. The Periplasmic portion of the chain corresponds to 90–144 (ALVNMQNNPSPFATCSFLPEFPTWMPLHEWFPAVMLPTGMCTDLPWRFMDVTMAE). The cysteines at positions 104 and 130 are disulfide-linked. The chain crosses the membrane as a helical span at residues 145-163 (WMVVVFSTFLVIWLLFIVP). At 164–175 (ILSGSTKPSLYK) the chain is on the cytoplasmic side.

Belongs to the DsbB family.

The protein localises to the cell inner membrane. Its function is as follows. Required for disulfide bond formation in some periplasmic proteins. Acts by oxidizing the DsbA protein. The protein is Disulfide bond formation protein B of Shewanella sp. (strain W3-18-1).